A 435-amino-acid chain; its full sequence is Gamma-glutamyl phosphate reductase (435 aa).

Belongs to the gamma-glutamyl phosphate reductase family.

The protein resides in the cytoplasm. It carries out the reaction L-glutamate 5-semialdehyde + phosphate + NADP(+) = L-glutamyl 5-phosphate + NADPH + H(+). It participates in amino-acid biosynthesis; L-proline biosynthesis; L-glutamate 5-semialdehyde from L-glutamate: step 2/2. Catalyzes the NADPH-dependent reduction of L-glutamate 5-phosphate into L-glutamate 5-semialdehyde and phosphate. The product spontaneously undergoes cyclization to form 1-pyrroline-5-carboxylate. This is Gamma-glutamyl phosphate reductase from Nostoc punctiforme (strain ATCC 29133 / PCC 73102).